A 565-amino-acid polypeptide reads, in one-letter code: Protein nucleotidyltransferase YdiU (565 aa).

ATP-binding residues include Gly-118, Gly-120, Arg-121, Lys-141, Asp-153, Gly-154, Arg-211, and Arg-218. Asp-290 functions as the Proton acceptor in the catalytic mechanism. Mg(2+)-binding residues include Asn-291 and Asp-300. Asp-300 contributes to the ATP binding site.

The protein belongs to the SELO family. Mg(2+) is required as a cofactor. Requires Mn(2+) as cofactor.

The catalysed reaction is L-seryl-[protein] + ATP = 3-O-(5'-adenylyl)-L-seryl-[protein] + diphosphate. The enzyme catalyses L-threonyl-[protein] + ATP = 3-O-(5'-adenylyl)-L-threonyl-[protein] + diphosphate. It catalyses the reaction L-tyrosyl-[protein] + ATP = O-(5'-adenylyl)-L-tyrosyl-[protein] + diphosphate. It carries out the reaction L-histidyl-[protein] + UTP = N(tele)-(5'-uridylyl)-L-histidyl-[protein] + diphosphate. The catalysed reaction is L-seryl-[protein] + UTP = O-(5'-uridylyl)-L-seryl-[protein] + diphosphate. The enzyme catalyses L-tyrosyl-[protein] + UTP = O-(5'-uridylyl)-L-tyrosyl-[protein] + diphosphate. Nucleotidyltransferase involved in the post-translational modification of proteins. It can catalyze the addition of adenosine monophosphate (AMP) or uridine monophosphate (UMP) to a protein, resulting in modifications known as AMPylation and UMPylation. In Nitrosospira multiformis (strain ATCC 25196 / NCIMB 11849 / C 71), this protein is Protein nucleotidyltransferase YdiU.